Reading from the N-terminus, the 559-residue chain is Prolyl 4-hydroxylase subunit alpha-1 (559 aa).

Positions 1 to 16 are cleaved as a signal peptide; the sequence is MRLALLVLATIGYAVA. N-linked (GlcNAc...) asparagine glycosylation occurs at Asn-158. The region spanning 404 to 512 is the Fe2OG dioxygenase domain; sequence TAEELQIANY…KWVSNKWIHE (109 aa). 3 residues coordinate Fe cation: His-422, Asp-424, and His-493. Residue Lys-503 participates in 2-oxoglutarate binding.

Belongs to the P4HA family. As to quaternary structure, heterotetramer of two alpha chains and two beta chains. Exists either as a phy-1(2)/pdi-2(2) tetramer or as a phy-1/phy-2/pdi-2(2) tetramer. The cofactor is Fe(2+). L-ascorbate is required as a cofactor.

The protein resides in the endoplasmic reticulum lumen. It carries out the reaction L-prolyl-[collagen] + 2-oxoglutarate + O2 = trans-4-hydroxy-L-prolyl-[collagen] + succinate + CO2. Its function is as follows. Catalyzes the post-translational formation of 4-hydroxyproline in -Xaa-Pro-Gly- sequences in collagens and other proteins. The protein is Prolyl 4-hydroxylase subunit alpha-1 (dpy-18) of Caenorhabditis elegans.